Here is a 134-residue protein sequence, read N- to C-terminus: Cell division protein SepF (134 aa).

Belongs to the SepF family. In terms of assembly, homodimer. Interacts with FtsZ.

The protein localises to the cytoplasm. In terms of biological role, cell division protein that is part of the divisome complex and is recruited early to the Z-ring. Probably stimulates Z-ring formation, perhaps through the cross-linking of FtsZ protofilaments. Its function overlaps with FtsA. This chain is Cell division protein SepF, found in Caldanaerobacter subterraneus subsp. tengcongensis (strain DSM 15242 / JCM 11007 / NBRC 100824 / MB4) (Thermoanaerobacter tengcongensis).